The following is a 283-amino-acid chain: Phosphatidylserine decarboxylase proenzyme (283 aa).

Residues D89, H146, and S249 each act as charge relay system; for autoendoproteolytic cleavage activity in the active site. S249 acts as the Schiff-base intermediate with substrate; via pyruvic acid; for decarboxylase activity in catalysis. S249 is subject to Pyruvic acid (Ser); by autocatalysis.

Belongs to the phosphatidylserine decarboxylase family. PSD-B subfamily. Prokaryotic type I sub-subfamily. Heterodimer of a large membrane-associated beta subunit and a small pyruvoyl-containing alpha subunit. Pyruvate is required as a cofactor. Is synthesized initially as an inactive proenzyme. Formation of the active enzyme involves a self-maturation process in which the active site pyruvoyl group is generated from an internal serine residue via an autocatalytic post-translational modification. Two non-identical subunits are generated from the proenzyme in this reaction, and the pyruvate is formed at the N-terminus of the alpha chain, which is derived from the carboxyl end of the proenzyme. The autoendoproteolytic cleavage occurs by a canonical serine protease mechanism, in which the side chain hydroxyl group of the serine supplies its oxygen atom to form the C-terminus of the beta chain, while the remainder of the serine residue undergoes an oxidative deamination to produce ammonia and the pyruvoyl prosthetic group on the alpha chain. During this reaction, the Ser that is part of the protease active site of the proenzyme becomes the pyruvoyl prosthetic group, which constitutes an essential element of the active site of the mature decarboxylase.

It is found in the cell membrane. The enzyme catalyses a 1,2-diacyl-sn-glycero-3-phospho-L-serine + H(+) = a 1,2-diacyl-sn-glycero-3-phosphoethanolamine + CO2. It functions in the pathway phospholipid metabolism; phosphatidylethanolamine biosynthesis; phosphatidylethanolamine from CDP-diacylglycerol: step 2/2. Catalyzes the formation of phosphatidylethanolamine (PtdEtn) from phosphatidylserine (PtdSer). The chain is Phosphatidylserine decarboxylase proenzyme from Legionella pneumophila (strain Corby).